The primary structure comprises 268 residues: Probable intron-encoded DNA endonuclease 1 (268 aa).

It belongs to the LAGLIDADG endonuclease family.

The protein localises to the mitochondrion. Functionally, mitochondrial DNA endonuclease involved in intron homing. The sequence is that of Probable intron-encoded DNA endonuclease 1 (hegI1) from Mycosarcoma maydis (Corn smut fungus).